Reading from the N-terminus, the 138-residue chain is DNA-directed RNA polymerase subunit omega (138 aa).

A disordered region spans residues 101–138; that stretch reads AEDDDTLEADGLTIHDGADSDLDLSDDAGQDTDEADED. Residues 119–138 are compositionally biased toward acidic residues; sequence DSDLDLSDDAGQDTDEADED.

It belongs to the RNA polymerase subunit omega family. The RNAP catalytic core consists of 2 alpha, 1 beta, 1 beta' and 1 omega subunit. When a sigma factor is associated with the core the holoenzyme is formed, which can initiate transcription.

It catalyses the reaction RNA(n) + a ribonucleoside 5'-triphosphate = RNA(n+1) + diphosphate. Promotes RNA polymerase assembly. Latches the N- and C-terminal regions of the beta' subunit thereby facilitating its interaction with the beta and alpha subunits. The protein is DNA-directed RNA polymerase subunit omega of Rhodospirillum rubrum (strain ATCC 11170 / ATH 1.1.1 / DSM 467 / LMG 4362 / NCIMB 8255 / S1).